An 853-amino-acid polypeptide reads, in one-letter code: MKPMLKDFSNLLLVVLCDYVLGEAEYLLLREPGHVALSNDTVYVDFQYFDGANGTLRNVSVLLLEANTNQTVTTKYLLTNQSQGTLKFECFYFKEAGDYWFTMTPEATDNSTPFPWWEKSAFLKVEWPVFHVDLNRSAKAAEGTFQVGLFTSQPLCPFPVDKPNIVVDVIFTNSLPEARRNSRQPLEIRTSKRTELAQGQWVEFGCAPVGPEAYVTVVLKLLGRDSVITSTGPIGLAQKFGYKLVMVPELTCESGVEVMVLPPPCTFVQGVVTVFKEAPRSPGKRTIHLAENSLPLGERRTIFNCTLFDMGKNKYCFDFGISSRSHFSAKEKECMLIQRNIETWGLWQPWSQCSATCGDGVRERRRVCLTSFPSRPGCPGMSLEASLCSLEECAAFQPSSPSPLQPQGPVKSNNIVTVTGISLCLFIIIATVLITLWRRFGRPAKCSTPARHNSIHSPSFRKNSDEENICELSEQRGSFSDGGDGPTGSPGDTGIPLTYRRSGPVPPEDDASGSESFQSNAQKIIPPLFSYRLAQQQLKEMKKKGLTETTKVYHVSQSPLTDTAIDAAPSAPLDLESPEEAAANKFRIKSPFPEQPAVSAGERPPSRLDLSVTQASCAISPSQTLIRKSQARHVGSRGGPSERSHARNAHFRRTASFHEARQARPFRERSMSTLTPRQAPAYSTRTRTCEQAEDRFRPQSRGAHLFPEKLEHFQEASGTGGPLNPLPKSYTLGQPLRKPDLGDRQAGLVAGIERTEPHRARRGPSPSHKSVSRKQSSPTSPKDSYQRVSPLSPSQCRKDKCQSFPTHPEFAFYDNTSFGLTEAEQRMLDLPGYFGSNEEDETTSTLSVEKLVI.

The first 24 residues, methionine 1–alanine 24, serve as a signal peptide directing secretion. The Extracellular segment spans residues glutamate 25–asparagine 414. 7 N-linked (GlcNAc...) asparagine glycosylation sites follow: asparagine 39, asparagine 53, asparagine 58, asparagine 69, asparagine 80, asparagine 135, and asparagine 304. One can recognise a TSP type-1 domain in the interval isoleucine 341–alanine 394. Disulfide bonds link cysteine 353-cysteine 388, cysteine 357-cysteine 393, and cysteine 368-cysteine 378. A helical membrane pass occupies residues isoleucine 415–threonine 435. Residues leucine 436–isoleucine 853 are Cytoplasmic-facing. Disordered stretches follow at residues lysine 445 to glutamine 518, threonine 624 to histidine 650, glutamate 668 to glycine 702, and glutamine 714 to lysine 800. Position 464 is a phosphoserine (serine 464). The segment covering methionine 671–threonine 686 has biased composition (polar residues). Over residues arginine 687 to arginine 697 the composition is skewed to basic and acidic residues. Residues serine 767–glutamine 795 show a composition bias toward polar residues.

As to quaternary structure, part of a complex composed of THSD1, PTK2/FAK1, TLN1 and VCL. Interacts with TLN1.

Its subcellular location is the endosome membrane. The protein resides in the cell junction. The protein localises to the focal adhesion. In terms of biological role, is a positive regulator of nascent focal adhesion assembly, involved in the modulation of endothelial cell attachment to the extracellular matrix. The polypeptide is Thrombospondin type-1 domain-containing protein 1 (THSD1) (Pongo abelii (Sumatran orangutan)).